The chain runs to 784 residues: Probable leucine-rich repeat receptor-like protein kinase IMK3 (784 aa).

The signal sequence occupies residues 1–48 (MEFITQNQAITSLSMINTDIDQPKASLRSRFLLHLIICLLFFVPPCSS). At 49 to 409 (QAWDGVVITQ…PSHRNLSTKD (361 aa)) the chain is on the extracellular side. Residue Asn82 is glycosylated (N-linked (GlcNAc...) asparagine). LRR repeat units follow at residues 126–148 (ALRK…LGLI), 150–172 (NLRG…LGVS), 174–197 (FLQT…ADSS), 198–220 (KLLR…LSRS), 222–242 (SLQF…DTWG), 247–268 (NLRV…SLCN), 271–294 (QLQD…SKLT), 295–317 (KLRK…LGNI), 319–342 (SLIH…SDLE), and 343–365 (SLNF…LSQK). Residues Asn203, Asn232, and Asn268 are each glycosylated (N-linked (GlcNAc...) asparagine). A glycan (N-linked (GlcNAc...) asparagine) is linked at Asn316. 4 N-linked (GlcNAc...) asparagine glycosylation sites follow: Asn348, Asn353, Asn367, and Asn404. A helical transmembrane segment spans residues 410–430 (IILIASGALLIVMLILVCVLC). Residues 431 to 784 (CLLRKKANET…VPEASASTSQ (354 aa)) are Cytoplasmic-facing. Positions 441 to 467 (KAKGGEAGPGAVAAKTEKGGEAEAGGE) are disordered. The Protein kinase domain maps to 488–773 (CATAEIMGKS…TTATTSEPLI (286 aa)). ATP contacts are provided by residues 494-502 (MGKSTYGTV) and Lys516. The disordered stretch occupies residues 760-784 (RPEETTATTSEPLIDVPEASASTSQ).

This sequence belongs to the protein kinase superfamily. Ser/Thr protein kinase family. As to quaternary structure, interacts with AGL24. Post-translationally, autophosphorylated. As to expression, expressed in meristems, including roots, vegetative, inflorescence and floral meristems, and in embryos.

Its subcellular location is the cell membrane. The enzyme catalyses L-seryl-[protein] + ATP = O-phospho-L-seryl-[protein] + ADP + H(+). It catalyses the reaction L-threonyl-[protein] + ATP = O-phospho-L-threonyl-[protein] + ADP + H(+). Its function is as follows. Can phosphorylate AGL24. This Arabidopsis thaliana (Mouse-ear cress) protein is Probable leucine-rich repeat receptor-like protein kinase IMK3 (IMK3).